A 573-amino-acid chain; its full sequence is Adenine deaminase 2 (573 aa).

Belongs to the metallo-dependent hydrolases superfamily. Adenine deaminase family. Mn(2+) is required as a cofactor.

It catalyses the reaction adenine + H2O + H(+) = hypoxanthine + NH4(+). In Shouchella clausii (strain KSM-K16) (Alkalihalobacillus clausii), this protein is Adenine deaminase 2.